The chain runs to 525 residues: FNIP repeat-containing protein DDB_G0274617 (525 aa).

Residues 65–107 (YQHEIKKEMLPSSIISIIFYNIKNILSSDSIPDTVKFLGFNGY) form an FNIP repeat.

The chain is FNIP repeat-containing protein DDB_G0274617 from Dictyostelium discoideum (Social amoeba).